A 471-amino-acid polypeptide reads, in one-letter code: Dynein regulatory complex subunit 4 (471 aa).

Residues methionine 1–glycine 24 form a disordered region. 2 coiled-coil regions span residues glutamate 23–isoleucine 239 and leucine 282–lysine 425.

Belongs to the DRC4 family. As to quaternary structure, component of the nexin-dynein regulatory complex (N-DRC). Interacts with DRC1, DRC2 and DRC5.

The protein localises to the cytoplasm. Its subcellular location is the cytoskeleton. It localises to the flagellum axoneme. The protein resides in the flagellum basal body. In terms of biological role, component of the nexin-dynein regulatory complex (N-DRC), a key regulator of ciliary/flagellar motility which maintains the alignment and integrity of the distal axoneme and regulates microtubule sliding in motile axonemes. Plays an important role in the assembly of the N-DRC linker. This is Dynein regulatory complex subunit 4 from Chlamydomonas reinhardtii (Chlamydomonas smithii).